The sequence spans 368 residues: Galanin receptor type 3 (368 aa).

Residues 1–20 are Extracellular-facing; the sequence is MADAQNISLDSPGSVGAVAV. N-linked (GlcNAc...) asparagine glycosylation is present at Asn-6. The helical transmembrane segment at 21–41 threads the bilayer; it reads PVVFALIFLLGTVGNGLVLAV. Topologically, residues 42–57 are cytoplasmic; sequence LLQPGPSAWQEPGSTT. The chain crosses the membrane as a helical span at residues 58–78; it reads DLFILNLAVADLCFILCCVPF. Residues 79 to 96 lie on the Extracellular side of the membrane; the sequence is QATIYTLDAWLFGALVCK. A disulfide bridge connects residues Cys-95 and Cys-172. A helical membrane pass occupies residues 97–118; the sequence is AVHLLIYLTMYASSFTLAAVSV. At 119–138 the chain is on the cytoplasmic side; the sequence is DRYLAVRHPLRSRALRTPRN. A helical membrane pass occupies residues 139–159; that stretch reads ARAAVGLVWLLAALFSAPYLS. Topologically, residues 160–184 are extracellular; that stretch reads YYGTVRYGALELCVPAWEDARRRAL. Residues 185–205 traverse the membrane as a helical segment; it reads DVATFAAGYLLPVAVVSLAYG. At 206–236 the chain is on the cytoplasmic side; sequence RTLRFLWAAVGPAGAAAAEARRRATGRAGRA. The helical transmembrane segment at 237-257 threads the bilayer; the sequence is MLAVAALYALCWGPHHALILC. The Extracellular segment spans residues 258 to 259; the sequence is FW. The helical transmembrane segment at 260 to 280 threads the bilayer; the sequence is YGRFAFSPATYACRLASHCLA. The Cytoplasmic segment spans residues 281 to 368; that stretch reads YANSCLNPLV…HGGEAARGPE (88 aa). Cys-308 carries the S-palmitoyl cysteine lipid modification. The segment at 317–368 is disordered; that stretch reads RRALRRVRPASSGPPGCPGDARPSGRLLAGGGQGPEPREGPVHGGEAARGPE.

This sequence belongs to the G-protein coupled receptor 1 family.

The protein resides in the cell membrane. In terms of biological role, receptor for the hormone galanin. Receptor for the hormone spexin-1. The sequence is that of Galanin receptor type 3 (GALR3) from Homo sapiens (Human).